Reading from the N-terminus, the 328-residue chain is E3 ubiquitin-protein ligase SINA-like 5 (328 aa).

A disordered region spans residues 1 to 77; that stretch reads MARSGGNDGH…GSPKSSQPVK (77 aa). Acidic residues-rich tracts occupy residues 10 to 20 and 27 to 62; these read HEEELDPELFE and GYEDGEFEEDEEEFEEEEEELEEEEDEEEEEEENVT. Residues 63–77 are compositionally biased toward polar residues; it reads TDEQSGSPKSSQPVK. Residues 86 to 122 form an RING-type; degenerate zinc finger; sequence CPTCCEPLKRPIYQCSNGHLACSSCCQKLNKKCSFCR. The segment at 136–324 is SBD; that stretch reads VIEASIVPCP…MQICIAYGYK (189 aa). An SIAH-type; degenerate zinc finger spans residues 139-197; that stretch reads ASIVPCPNAKHGCKETTTYCNQSSHEKVCKFVRCSCPVSNCNYVSSYSNLKSHACSTAH. Residues Cys144, Cys151, His163, Cys167, Cys174, Cys179, His191, and His197 each contribute to the Zn(2+) site.

Belongs to the SINA (Seven in absentia) family.

The catalysed reaction is S-ubiquitinyl-[E2 ubiquitin-conjugating enzyme]-L-cysteine + [acceptor protein]-L-lysine = [E2 ubiquitin-conjugating enzyme]-L-cysteine + N(6)-ubiquitinyl-[acceptor protein]-L-lysine.. It participates in protein modification; protein ubiquitination. Functionally, E3 ubiquitin-protein ligase that mediates ubiquitination and subsequent proteasomal degradation of target proteins. E3 ubiquitin ligases accept ubiquitin from an E2 ubiquitin-conjugating enzyme in the form of a thioester and then directly transfers the ubiquitin to targeted substrates. It probably triggers the ubiquitin-mediated degradation of different substrates. The protein is E3 ubiquitin-protein ligase SINA-like 5 of Arabidopsis thaliana (Mouse-ear cress).